The following is a 314-amino-acid chain: BTB/POZ domain-containing adapter for CUL3-mediated RhoA degradation protein 2 (314 aa).

In terms of domain architecture, BTB spans lysine 32–lysine 100.

It belongs to the BACURD family. In terms of assembly, component of the BCR(TNFAIP1) E3 ubiquitin ligase complex, at least composed of CUL3, TNFAIP1/BACURD2 and RBX1.

It is found in the cytoplasm. Its subcellular location is the nucleus. The protein resides in the endosome. The protein operates within protein modification; protein ubiquitination. Functionally, substrate-specific adapter of a BCR (BTB-CUL3-RBX1) E3 ubiquitin-protein ligase complex involved in regulation of cytoskeleton structure. The BCR(TNFAIP1) E3 ubiquitin ligase complex mediates the ubiquitination of target proteins, leading to their degradation by the proteasome. This chain is BTB/POZ domain-containing adapter for CUL3-mediated RhoA degradation protein 2 (TNFAIP1), found in Gallus gallus (Chicken).